The sequence spans 895 residues: Probable methyltransferase PMT27 (895 aa).

Residues 1–16 lie on the Cytoplasmic side of the membrane; the sequence is MAFGRGRGNKRTSTSS. The chain crosses the membrane as a helical; Signal-anchor for type II membrane protein span at residues 17 to 37; that stretch reads YASTITMVIFVALCVFGVWML. At 38 to 895 the chain is on the lumenal side; it reads SSNSVIPPQI…KGFWRPETSQ (858 aa). Residues 43–52 show a composition bias toward polar residues; the sequence is IPPQITQGST. Residues 43 to 362 are disordered; the sequence is IPPQITQGST…QRQTSESNTV (320 aa). The span at 90 to 114 shows a compositional bias: basic and acidic residues; that stretch reads NPGKLPDDAVKSEDEQRKSAKEKSE. The span at 115–127 shows a compositional bias: low complexity; the sequence is TTSSKTQTQETQQ. The span at 129 to 143 shows a compositional bias: basic and acidic residues; it reads NDDKISEEKEKDNGK. An N-linked (GlcNAc...) asparagine glycan is attached at N145. Residues 154–174 are compositionally biased toward basic and acidic residues; it reads GQMKKVVKEFEKEQKQQRDED. Over residues 176–191 the composition is skewed to low complexity; the sequence is GTQPKGTQGQEQGQGK. Composition is skewed to polar residues over residues 199–232 and 243–256; these read GNKQ…GETS and PEEQ…TGQQ. Over residues 257 to 320 the composition is skewed to basic and acidic residues; it reads NEEKTTASEE…RKDEKKHEQG (64 aa). Residues 337–346 show a composition bias toward polar residues; sequence SQKSWKSQAT. 2 N-linked (GlcNAc...) asparagine glycosylation sites follow: N375 and N709.

The protein belongs to the methyltransferase superfamily.

The protein resides in the endoplasmic reticulum membrane. This Arabidopsis thaliana (Mouse-ear cress) protein is Probable methyltransferase PMT27.